The sequence spans 252 residues: Type III pantothenate kinase (252 aa).

6 to 13 (DIGNTSTA) serves as a coordination point for ATP. 104–107 (GADR) provides a ligand contact to substrate. The Proton acceptor role is filled by aspartate 106. Aspartate 128 contacts K(+). Residue threonine 131 coordinates ATP. Position 183 (threonine 183) interacts with substrate.

This sequence belongs to the type III pantothenate kinase family. As to quaternary structure, homodimer. Requires NH4(+) as cofactor. It depends on K(+) as a cofactor.

The protein resides in the cytoplasm. It carries out the reaction (R)-pantothenate + ATP = (R)-4'-phosphopantothenate + ADP + H(+). It functions in the pathway cofactor biosynthesis; coenzyme A biosynthesis; CoA from (R)-pantothenate: step 1/5. Catalyzes the phosphorylation of pantothenate (Pan), the first step in CoA biosynthesis. The polypeptide is Type III pantothenate kinase (Thermus thermophilus (strain ATCC BAA-163 / DSM 7039 / HB27)).